The primary structure comprises 495 residues: Glutamyl-tRNA(Gln) amidotransferase subunit A (495 aa).

Catalysis depends on charge relay system residues lysine 75 and serine 150. Serine 174 acts as the Acyl-ester intermediate in catalysis.

The protein belongs to the amidase family. GatA subfamily. Heterotrimer of A, B and C subunits.

It catalyses the reaction L-glutamyl-tRNA(Gln) + L-glutamine + ATP + H2O = L-glutaminyl-tRNA(Gln) + L-glutamate + ADP + phosphate + H(+). Allows the formation of correctly charged Gln-tRNA(Gln) through the transamidation of misacylated Glu-tRNA(Gln) in organisms which lack glutaminyl-tRNA synthetase. The reaction takes place in the presence of glutamine and ATP through an activated gamma-phospho-Glu-tRNA(Gln). The chain is Glutamyl-tRNA(Gln) amidotransferase subunit A from Paraburkholderia xenovorans (strain LB400).